An 867-amino-acid chain; its full sequence is MVNFTIDQIRHMMNMTHNIRNLSVVAHVDHGKSTLTDALVSKAGIISKKAAGDARFTDTRADEQERCITIKSTGISLYFEYDPETIDKQAAAPLNPTEEGDPTEEDIEIKQNSYLINLIDSPGHVDFSSEVTASLRVTDGALVVVDSVGGVCVQTETVLRQALAERIRPVLSCMCNKLDRVIAELQLDPEEAYHKLMKSVESVNVIIATYPDEAVGDIQVYPNQGTVAFGSGLQQWGFTRKFARLYAKKFGIDETKMMERLWGDYFFDAENKKWAKTDKKDERKAQGKKPLKRAFVQFVLDPVYGLYRALNEGRTEKYMKMLDTLGVTLTSEEKDLRDKALVKRVMSKWLPAADALLEMIVLHLPSPVDAQKYRAPLLYDGPEDDEACTAMKKCDPNGCLMMYVSKMVPTADQSRFYAFGRVFSGIIRSGQKVRILGPKYSATNKSDLLIKSVQRTVIMMGRYVEQVADIPCGNTCGLVGVDQYILKQATLTDCESAMTIKMMKFSVSPVVRVAVEPKNPGDLPRLVEGLKRLSKSDPMVVVITNTEAGEHIIAGAGELHLEICLKDLQDDFMKGTPIKISPPVVEFRESVNQATTEPGLAKSPNKHNRLYVNVEPMPDGLAQEIEDQKVTPEQEFKERARYMSTTYGMDVELMRKIWAFGPNGNGPNIFCEATHGVQYLNEIKESVVAGFGAACAAGPIVDEPCRNVLCKLMDVTLHADSIHRGMGQIMPPARRVVLGTMLKAEPILVEPVFLCEIQVPRAVSGGIYGVLTRRRGHVFEEIDEVGTPMMNIKSYLPVAESFGFTQDLRGATAGQAFPQCVFSHWQAYNGGDPLTEGTKTNEMVKSIRNRKGLAPEVPTPERYLDKL.

The region spanning 17–368 (HNIRNLSVVA…MIVLHLPSPV (352 aa)) is the tr-type G domain. 26-33 (AHVDHGKS) provides a ligand contact to GTP. Thr-57 and Thr-59 each carry phosphothreonine. Residues 176 to 179 (NKLD) and 231 to 233 (SGL) contribute to the GTP site. His-723 is modified (diphthamide).

The protein belongs to the TRAFAC class translation factor GTPase superfamily. Classic translation factor GTPase family. EF-G/EF-2 subfamily. Post-translationally, phosphorylation by EF-2 kinase completely inactivates EF-2.

It is found in the cytoplasm. It carries out the reaction GTP + H2O = GDP + phosphate + H(+). In terms of biological role, catalyzes the GTP-dependent ribosomal translocation step during translation elongation. During this step, the ribosome changes from the pre-translocational (PRE) to the post-translocational (POST) state as the newly formed A-site-bound peptidyl-tRNA and P-site-bound deacylated tRNA move to the P and E sites, respectively. Catalyzes the coordinated movement of the two tRNA molecules, the mRNA and conformational changes in the ribosome. The chain is Elongation factor 2 from Blastocystis hominis.